We begin with the raw amino-acid sequence, 263 residues long: MLRKAISTARNFKYPLFNCERRFSYFDMFRSKRKFTSGILTEQLALKLDSELGYVKQVLDETLPKKGYEKALHSFIIHEDPSLNYISALKETAKERIRVTVPVYSSRKSYVQTKPITHSAENENGNETSDELVFFQHSIPAYVQLTNNHGTILCALILCKGMLHFDSISFQSPQNSQAFSSDLRLILQKSQKYTGRKTKHVPASIKSSLLEFLDEQGITVKFMKALISRSWRKENVSYKHWIHNIIGFILPSESSTTKKSDSQ.

It localises to the mitochondrion. This is an uncharacterized protein from Schizosaccharomyces pombe (strain 972 / ATCC 24843) (Fission yeast).